The chain runs to 245 residues: 3-deoxy-manno-octulosonate cytidylyltransferase (245 aa).

The protein belongs to the KdsB family.

Its subcellular location is the cytoplasm. The catalysed reaction is 3-deoxy-alpha-D-manno-oct-2-ulosonate + CTP = CMP-3-deoxy-beta-D-manno-octulosonate + diphosphate. The protein operates within nucleotide-sugar biosynthesis; CMP-3-deoxy-D-manno-octulosonate biosynthesis; CMP-3-deoxy-D-manno-octulosonate from 3-deoxy-D-manno-octulosonate and CTP: step 1/1. It participates in bacterial outer membrane biogenesis; lipopolysaccharide biosynthesis. Its function is as follows. Activates KDO (a required 8-carbon sugar) for incorporation into bacterial lipopolysaccharide in Gram-negative bacteria. This Rhodopseudomonas palustris (strain ATCC BAA-98 / CGA009) protein is 3-deoxy-manno-octulosonate cytidylyltransferase.